Consider the following 546-residue polypeptide: Cholesterol oxidase (546 aa).

The tat-type signal signal peptide spans 1-42 (MTAQQHLSRRRMLGMAAFGAAALAGGTTIAAPRAAAAAKSAA). FAD is bound by residues Tyr57, Gly58, Glu77, Gly152, Asn156, Gly157, Met159, and Val287. Active-site proton acceptor residues include Glu398 and His484. FAD is bound by residues Gly512 and Phe524.

Belongs to the GMC oxidoreductase family. As to quaternary structure, monomer. The cofactor is FAD. Predicted to be exported by the Tat system. The position of the signal peptide cleavage has been experimentally proven.

It is found in the secreted. The catalysed reaction is cholesterol + O2 = cholest-5-en-3-one + H2O2. It catalyses the reaction cholest-5-en-3-one = cholest-4-en-3-one. Its pathway is steroid metabolism; cholesterol degradation. Functionally, bifunctional enzyme that catalyzes the oxidation and isomerization of cholesterol to cholestenone (cholest-4-en-3-one), an initial step in the cholesterol degradation process. The cholesterol degradation pathway allows the bacterium to utilize cholesterol as its sole source of carbon and energy. The polypeptide is Cholesterol oxidase (Streptomyces sp. (strain SA-COO)).